We begin with the raw amino-acid sequence, 231 residues long: N-acetylmuramate alpha-1-phosphate uridylyltransferase (231 aa).

Residues 11–13 (GER) and Lys-23 each bind UTP. Residue Asn-106 coordinates substrate. Residue Asp-108 participates in Mg(2+) binding. Substrate contacts are provided by Asp-146 and Asp-213. Asp-213 lines the Mg(2+) pocket.

Belongs to the nucleotidyltransferase MurU family. In terms of assembly, monomer. Mg(2+) is required as a cofactor.

It catalyses the reaction N-acetyl-alpha-D-muramate 1-phosphate + UDP + H(+) = UDP-N-acetyl-alpha-D-muramate + phosphate. It participates in cell wall biogenesis; peptidoglycan recycling. Its function is as follows. Catalyzes the formation of UDP-N-acetylmuramate (UDP-MurNAc), a crucial precursor of the bacterial peptidoglycan cell wall, from UTP and MurNAc-alpha-1P. Is likely involved in peptidoglycan recycling as part of a cell wall recycling pathway that bypasses de novo biosynthesis of the peptidoglycan precursor UDP-MurNAc. Is able to complement the fosfomycin sensitivity phenotype of a P.putida mutant lacking murU. The sequence is that of N-acetylmuramate alpha-1-phosphate uridylyltransferase from Neisseria meningitidis serogroup B (strain ATCC BAA-335 / MC58).